Here is a 159-residue protein sequence, read N- to C-terminus: MGLPEDFITELQIPSYILKILYVIGFFRDIVDALCPYIGLPRFLDHNETSAPDLTRHALSTSASLANELIPVVRFSDLPTDPEDCCTVCLSDFESDDKVRQLPKCGHVFHHYCLDRWIVDYNKMKCPVCRHRFLPKEKYTQSDWGSGSDWFSDEVESTN.

The RING-type; atypical zinc-finger motif lies at 86–130; sequence CTVCLSDFESDDKVRQLPKCGHVFHHYCLDRWIVDYNKMKCPVCR.

As to expression, predominantly expressed in stems.

It carries out the reaction S-ubiquitinyl-[E2 ubiquitin-conjugating enzyme]-L-cysteine + [acceptor protein]-L-lysine = [E2 ubiquitin-conjugating enzyme]-L-cysteine + N(6)-ubiquitinyl-[acceptor protein]-L-lysine.. It functions in the pathway protein modification; protein ubiquitination. Probable E3 ubiquitin-protein ligase that may possess E3 ubiquitin ligase activity in vitro. The polypeptide is Probable E3 ubiquitin-protein ligase RHA1A (Arabidopsis thaliana (Mouse-ear cress)).